The chain runs to 180 residues: Cell division protein ZapC (180 aa).

This sequence belongs to the ZapC family. Interacts directly with FtsZ.

Its subcellular location is the cytoplasm. In terms of biological role, contributes to the efficiency of the cell division process by stabilizing the polymeric form of the cell division protein FtsZ. Acts by promoting interactions between FtsZ protofilaments and suppressing the GTPase activity of FtsZ. This is Cell division protein ZapC from Vibrio vulnificus (strain CMCP6).